We begin with the raw amino-acid sequence, 337 residues long: Mating-type protein MAT-2 (337 aa).

Residues 125 to 193 constitute a DNA-binding region (HMG box); it reads APRPMNCWII…EHLRQHPNYK (69 aa). A disordered region spans residues 171 to 219; the sequence is KRPWQDAAQSAKEEHLRQHPNYKYTPRKPGEKKKRQSRKSKRAAATTTA. The span at 200–212 shows a compositional bias: basic residues; the sequence is GEKKKRQSRKSKR.

The protein localises to the nucleus. The chain is Mating-type protein MAT-2 (MAT2) from Cochliobolus sativus (Common root rot and spot blotch fungus).